A 240-amino-acid chain; its full sequence is Biotin--[acetyl-CoA-carboxylase] ligase (240 aa).

Residues Met1–Asp176 enclose the BPL/LPL catalytic domain. Biotin contacts are provided by residues Ser7–Asn9, Gln30, Arg34–Arg36, and Lys102.

Belongs to the biotin--protein ligase family.

The enzyme catalyses biotin + L-lysyl-[protein] + ATP = N(6)-biotinyl-L-lysyl-[protein] + AMP + diphosphate + H(+). Activates biotin to form biotinyl-5'-adenylate and transfers the biotin moiety to biotin-accepting proteins. The protein is Biotin--[acetyl-CoA-carboxylase] ligase (birA) of Paracoccus denitrificans.